The following is a 96-amino-acid chain: Co-chaperonin GroES (96 aa).

The protein belongs to the GroES chaperonin family. As to quaternary structure, heptamer of 7 subunits arranged in a ring. Interacts with the chaperonin GroEL.

Its subcellular location is the cytoplasm. In terms of biological role, together with the chaperonin GroEL, plays an essential role in assisting protein folding. The GroEL-GroES system forms a nano-cage that allows encapsulation of the non-native substrate proteins and provides a physical environment optimized to promote and accelerate protein folding. GroES binds to the apical surface of the GroEL ring, thereby capping the opening of the GroEL channel. This chain is Co-chaperonin GroES, found in Wolbachia sp. subsp. Drosophila simulans (strain wRi).